Consider the following 202-residue polypeptide: ATP-dependent Clp protease proteolytic subunit (202 aa).

Catalysis depends on S98, which acts as the Nucleophile. H123 is an active-site residue.

Belongs to the peptidase S14 family. Fourteen ClpP subunits assemble into 2 heptameric rings which stack back to back to give a disk-like structure with a central cavity, resembling the structure of eukaryotic proteasomes.

The protein resides in the cytoplasm. It catalyses the reaction Hydrolysis of proteins to small peptides in the presence of ATP and magnesium. alpha-casein is the usual test substrate. In the absence of ATP, only oligopeptides shorter than five residues are hydrolyzed (such as succinyl-Leu-Tyr-|-NHMec, and Leu-Tyr-Leu-|-Tyr-Trp, in which cleavage of the -Tyr-|-Leu- and -Tyr-|-Trp bonds also occurs).. Cleaves peptides in various proteins in a process that requires ATP hydrolysis. Has a chymotrypsin-like activity. Plays a major role in the degradation of misfolded proteins. This Solidesulfovibrio magneticus (strain ATCC 700980 / DSM 13731 / RS-1) (Desulfovibrio magneticus) protein is ATP-dependent Clp protease proteolytic subunit.